Reading from the N-terminus, the 589-residue chain is MRTHYCGQINAELAGQEVTLCGWVNKRRDLGGLIFIDLRDREGLLQVVFDPDQKALFETANSLRQEFCVRLSGKVNRRPESQVNKNMATGEVELLATDLEIFSRSEPLPIDFNQQVSEEARLRYRYLDLRRPQMNEKLQFRAKVTSAVRRFFDDNGFLDIETPMLTRATPEGARDYLVPSRTHKGRFFALPQSPQLFKQLLMMSGFDRYYQIVKCFRDEDLRADRQPEFTQIDIETSFMSAEQVMEITEQMARDLFKQLLDVDLGEFPSMTWHEAMRRFGSDKPDLRNPLELVDVADVLKDVEFKVFSGPANDEEGRVAAIRLPGQAENVSRKMIDEYTQFVGIYGAKGLAWIKVNDRSAGREGLQSPVLKFLPDEVIEPLLERMQAETGDVLFFGSDKSHVVAEALGALRLKLGKDFELVSNEWKPLWVVDFPMFEVADDGSLAALHHPFTAPVNVTPEELKANPAAAISNAYDMVLNGVELGGGSVRIHENAMQQAVFEVLGIEKDEAQEKFGFLLEALKYGTPPHAGLAFGLDRLVMLMVGASSIRDVIAFPKTTTAACVLTDAPGAANPAALQELGVKSIVKEDE.

L-aspartate is bound at residue Glu171. Residues 195–198 (QLFK) are aspartate. Arg217 contributes to the L-aspartate binding site. Residues 217–219 (RDE) and Gln226 each bind ATP. His448 is a binding site for L-aspartate. Glu482 is a binding site for ATP. Arg489 contributes to the L-aspartate binding site. 534 to 537 (GLDR) lines the ATP pocket.

This sequence belongs to the class-II aminoacyl-tRNA synthetase family. Type 1 subfamily. Homodimer.

It localises to the cytoplasm. The catalysed reaction is tRNA(Asp) + L-aspartate + ATP = L-aspartyl-tRNA(Asp) + AMP + diphosphate. Its function is as follows. Catalyzes the attachment of L-aspartate to tRNA(Asp) in a two-step reaction: L-aspartate is first activated by ATP to form Asp-AMP and then transferred to the acceptor end of tRNA(Asp). The polypeptide is Aspartate--tRNA ligase (Idiomarina loihiensis (strain ATCC BAA-735 / DSM 15497 / L2-TR)).